A 534-amino-acid polypeptide reads, in one-letter code: Capsid scaffolding protein (534 aa).

Active-site charge relay system residues include His46, Ser114, and His134. The segment at 253 to 272 (EDIISIPKSAFLSMLQSSID) is interaction with pAP. Positions 336–342 (RTGKRKR) match the Nuclear localization signal motif. Disordered regions lie at residues 337-356 (TGKR…PGEE) and 466-524 (GAPP…KIRK). Residues 479–491 (QSIQQQAPETTHT) are compositionally biased toward polar residues. The segment at 514-534 (SRSSPKSKIRKMFCEELLNKQ) is interaction with major capsid protein.

It belongs to the herpesviridae capsid scaffolding protein family. As to quaternary structure, homomultimer. Interacts with major capsid protein. Exists in a monomer-dimer equilibrium with the dimer being the active species. Capsid scaffolding protein is cleaved by assemblin after formation of the spherical procapsid. As a result, the capsid obtains its mature, icosahedral shape. Cleavages occur at two or more sites: release (R-site) and maturation (M-site).

The protein localises to the host cytoplasm. It is found in the host nucleus. The enzyme catalyses Cleaves -Ala-|-Ser- and -Ala-|-Ala- bonds in the scaffold protein.. Its function is as follows. Acts as a scaffold protein by binding major capsid protein in the cytoplasm, inducing the nuclear localization of both proteins. Multimerizes in the nucleus such as major capsid protein forms the icosahedral T=16 capsid. Autocatalytic cleavage releases the assembly protein, and subsequently abolishes interaction with major capsid protein. Cleavages products are evicted from the capsid before or during DNA packaging. In terms of biological role, protease that plays an essential role in virion assembly within the nucleus. Catalyzes the cleavage of the assembly protein after formation of the spherical procapsid. By that cleavage, the capsid matures and gains its icosahedral shape. The cleavage sites seem to include -Ala-Ser-, -Ala-Ala-, as well as Ala-Thr bonds. Assemblin and cleavages products are evicted from the capsid before or during DNA packaging. Plays a major role in capsid assembly. Acts as a scaffold protein by binding major capsid protein. Multimerizes in the nucleus such as major capsid protein forms the icosahedral T=16 capsid. Cleaved by assemblin after capsid completion. The cleavages products are evicted from the capsid before or during DNA packaging. The polypeptide is Capsid scaffolding protein (ORF17) (Human herpesvirus 8 type P (isolate GK18) (HHV-8)).